We begin with the raw amino-acid sequence, 324 residues long: MAPSFVTIDTTPDFDMAPAPSFQPMSTGSPSKRTLLLAPPSIATQEEKLRDLFTAFDRSTTDLQMLDRISAGFVSLPANTYDHILVLTDTDGTRRSEALHLLTRDVYTALVPCMKAGAKLQTQDNFFGEAEEREAVLAGLIKTDAGFEKMDQPKSFAIPLRRNGKKKDAAKTETFAPAPAPAPPVQPVTVGMINNDDDYENDDDLIDEDTLLSDEDLKRPIQPPECQPKPGRRRRACKDCTCGLAARLEAEEQAEREKADKALNVMKLETEDLNELDFTVQGKTGSCGNCALGDAFRCAGCPFIGLPAFKPGQEVQILENVAQL.

Residues 28–158 (GSPSKRTLLL…KMDQPKSFAI (131 aa)) are N-terminal SAM-like domain. Positions 159 to 217 (PLRRNGKKKDAAKTETFAPAPAPAPPVQPVTVGMINNDDDYENDDDLIDEDTLLSDEDL) are linker. [2Fe-2S] cluster contacts are provided by Cys226, Cys237, Cys240, and Cys242. The tract at residues 226–242 (CQPKPGRRRRACKDCTC) is fe-S binding site A. [4Fe-4S] cluster-binding residues include Cys287, Cys290, Cys298, and Cys301. Short sequence motifs (cx2C motif) lie at residues 287-290 (CGNC) and 298-301 (CAGC). Positions 287-301 (CGNCALGDAFRCAGC) are fe-S binding site B.

The protein belongs to the anamorsin family. As to quaternary structure, monomer. Interacts with tah18. Interacts with mia40. It depends on [2Fe-2S] cluster as a cofactor. [4Fe-4S] cluster is required as a cofactor.

It is found in the cytoplasm. The protein resides in the mitochondrion intermembrane space. In terms of biological role, component of the cytosolic iron-sulfur (Fe-S) protein assembly (CIA) machinery required for the maturation of extramitochondrial Fe-S proteins. Part of an electron transfer chain functioning in an early step of cytosolic Fe-S biogenesis, facilitating the de novo assembly of a [4Fe-4S] cluster on the scaffold complex cfd1-nbp35. Electrons are transferred to dre2 from NADPH via the FAD- and FMN-containing protein tah18. Tah18-dre2 are also required for the assembly of the diferric tyrosyl radical cofactor of ribonucleotide reductase (RNR), probably by providing electrons for reduction during radical cofactor maturation in the catalytic small subunit rnr2. The polypeptide is Fe-S cluster assembly protein dre2 (Aspergillus niger (strain ATCC MYA-4892 / CBS 513.88 / FGSC A1513)).